The sequence spans 514 residues: Activin receptor type-2A (514 aa).

The signal sequence occupies residues methionine 1–glycine 20. At serine 21–proline 136 the chain is on the extracellular side. Intrachain disulfides connect cysteine 31-cysteine 61, cysteine 51-cysteine 79, cysteine 86-cysteine 105, cysteine 92-cysteine 104, and cysteine 106-cysteine 111. 3 N-linked (GlcNAc...) asparagine glycosylation sites follow: asparagine 46, asparagine 67, and asparagine 88. The helical transmembrane segment at leucine 137–tyrosine 162 threads the bilayer. Residues arginine 163–leucine 514 are Cytoplasmic-facing. The Protein kinase domain occupies leucine 193–leucine 486. Residues lysine 199 to valine 207 and lysine 220 contribute to the ATP site. Catalysis depends on aspartate 323, which acts as the Proton acceptor.

It belongs to the protein kinase superfamily. TKL Ser/Thr protein kinase family. TGFB receptor subfamily.

The protein resides in the cell membrane. It catalyses the reaction L-threonyl-[receptor-protein] + ATP = O-phospho-L-threonyl-[receptor-protein] + ADP + H(+). The enzyme catalyses L-seryl-[receptor-protein] + ATP = O-phospho-L-seryl-[receptor-protein] + ADP + H(+). Its function is as follows. Receptor for activin A, activin B and inhibin A. Involved in transmembrane signaling. This chain is Activin receptor type-2A (acvr2a), found in Xenopus laevis (African clawed frog).